Here is a 119-residue protein sequence, read N- to C-terminus: C-C motif chemokine 24 (119 aa).

The signal sequence occupies residues 1–26 (MAGLMTIVTSLLFLGVCAHHIIPTGS). 2 disulfides stabilise this stretch: Cys33/Cys58 and Cys34/Cys74. An N-linked (GlcNAc...) asparagine glycan is attached at Asn115.

It belongs to the intercrine beta (chemokine CC) family. N-glycosylated. Activated monocytes and activated T lymphocytes.

Its subcellular location is the secreted. Its function is as follows. Chemotactic for resting T-lymphocytes, and eosinophils. Has lower chemotactic activity for neutrophils but none for monocytes and activated lymphocytes. Is a strong suppressor of colony formation by a multipotential hematopoietic progenitor cell line. Binds to CCR3. This is C-C motif chemokine 24 from Homo sapiens (Human).